Reading from the N-terminus, the 282-residue chain is MASKRWCFTLNYKTALERETFISLFSRDELNYFVCGDEIAPTTGQKHLQGYVSMKKLIRLGGLKKKFGSIAHWEIAKGDDFQNRDYCTKETLIAEIGAPVKKGSNRRKIMEIYEEDPEEMKLRDPDTALRCKAKKLREEYCSEVSVFSLRPWQIELHRALMEVPDDRTIIWAYGPDGGEGKSTFAKELIKYGWFYTAGGKTQDILYMYAQDPERNIAFDVPRCSSEMMNYQAMEMMKNRVFASTKYRPVDLCIRKKVHLIVFANVAPDPTKLSEDRIVIINC.

Positions 1–99 (MASKRWCFTL…ETLIAEIGAP (99 aa)) constitute a CRESS-DNA virus Rep endonuclease domain. The short motif at 7-10 (CFTL) is the RCR-1 element. A divalent metal cation-binding residues include Glu-38 and His-47. Residues 47-49 (HLQ) carry the RCR-2 motif. Residues 56–77 (KLIRLGGLKKKFGSIAHWEIAK) carry the Nuclear localization signal motif. The active-site For DNA cleavage activity is the Tyr-86. The RCR-3 motif lies at 86–89 (YCTK). Positions 99 to 105 (PVKKGSN) match the Nuclear localization signal motif. 174 to 182 (GPDGGEGKS) is a binding site for ATP.

This sequence belongs to the nanoviridea/circoviridae replication-associated protein family. Homooligomer (Potential). Rep binds to repeated DNA motifs (iterons). The cofactor is Mg(2+). Mn(2+) is required as a cofactor.

It localises to the host nucleus. It carries out the reaction ATP + H2O = ADP + phosphate + H(+). Functionally, initiates and terminates the replication only of its own subviral DNA molecule. The closed circular ssDNA genome is first converted to a superhelical dsDNA. Rep binds a specific hairpin at the genome origin of replication. Introduces an endonucleolytic nick within the intergenic region of the genome, thereby initiating the rolling circle replication (RCR). Following cleavage, binds covalently to the 5'-phosphate of DNA as a tyrosyl ester. The cleavage gives rise to a free 3'-OH that serves as a primer for the cellular DNA polymerase. The polymerase synthesizes the (+) strand DNA by rolling circle mechanism. After one round of replication, a Rep-catalyzed nucleotidyl transfer reaction releases a circular single-stranded virus genome, thereby terminating the replication. Displays origin-specific DNA cleavage, nucleotidyl transferase, ATPase and helicase activities. The polypeptide is Para-Rep C2 (C2) (Milk vetch dwarf C2 alphasatellite (MVDC2A)).